We begin with the raw amino-acid sequence, 302 residues long: Ribosomal RNA small subunit methyltransferase H (302 aa).

S-adenosyl-L-methionine-binding positions include 43-45 (GGH), aspartate 62, phenylalanine 89, aspartate 105, and histidine 112. Residues 276 to 302 (EIANNPRSRSAKLRIAEKQAETGDEDN) form a disordered region.

Belongs to the methyltransferase superfamily. RsmH family.

It is found in the cytoplasm. It carries out the reaction cytidine(1402) in 16S rRNA + S-adenosyl-L-methionine = N(4)-methylcytidine(1402) in 16S rRNA + S-adenosyl-L-homocysteine + H(+). In terms of biological role, specifically methylates the N4 position of cytidine in position 1402 (C1402) of 16S rRNA. In Nostoc sp. (strain PCC 7120 / SAG 25.82 / UTEX 2576), this protein is Ribosomal RNA small subunit methyltransferase H.